The sequence spans 433 residues: Sensor protein RstB (433 aa).

Topologically, residues 1 to 3 (MKK) are cytoplasmic. The helical transmembrane segment at 4-24 (LFIQFYLLLFVCFLVMSLLVG) threads the bilayer. Over 25–135 (LVYKFTAERA…PYLYYLHQMR (111 aa)) the chain is Periplasmic. The chain crosses the membrane as a helical span at residues 136–156 (LLDIALIAFIAISLAFPVFIW). Residues 157 to 433 (MRPHWQDMLK…WHNIPQFTSA (277 aa)) lie on the Cytoplasmic side of the membrane. Residues 158–210 (RPHWQDMLKLEAAAQRFGDGHLNERIHFDEGSSFERLGVAFNQMADNINALIA) form the HAMP domain. The Histidine kinase domain maps to 218 to 425 (GIAHELRTPL…RFSFSWPLWH (208 aa)). Histidine 276 is subject to Phosphohistidine; by autocatalysis.

Autophosphorylated.

It is found in the cell inner membrane. The catalysed reaction is ATP + protein L-histidine = ADP + protein N-phospho-L-histidine.. Member of the two-component regulatory system RstB/RstA. RstB functions as a membrane-associated protein kinase that phosphorylates RstA. The chain is Sensor protein RstB (rstB) from Escherichia coli (strain K12).